A 1298-amino-acid polypeptide reads, in one-letter code: Ras guanine nucleotide exchange factor Q (1298 aa).

5 disordered regions span residues 1-26 (MDIN…INNF), 46-88 (NNNI…SIEG), 211-271 (NISN…GPLK), 314-384 (YTPP…QQQQ), and 459-533 (LSNG…STTT). 2 stretches are compositionally biased toward low complexity: residues 211-245 (NISN…NSNN) and 315-384 (TPPS…QQQQ). Positions 352–389 (SSLNANNNTNNNNQQLQQQQQQQQQQQLQQQQQLTKSY) form a coiled coil. The span at 473–482 (LHLSTESTTS) shows a compositional bias: polar residues. Low complexity-rich tracts occupy residues 483–501 (NNNN…NNNN) and 508–533 (TTNS…STTT). The 140-residue stretch at 550–689 (DKDEVIAGER…YLKKAINDSG (140 aa)) folds into the N-terminal Ras-GEF domain. One can recognise a DEP domain in the interval 723 to 801 (MSQSLQLKER…SSSSTTTTTT (79 aa)). Disordered stretches follow at residues 781–864 (SKSG…PNSI) and 884–920 (GIAN…SNSF). Low complexity predominate over residues 783 to 864 (SGSSFSPSSS…ITSTSLPNSI (82 aa)). The Ras-GEF domain occupies 964 to 1193 (HPVEIARQLT…YKASHMIEQP (230 aa)). Residues 1214-1267 (TTTTTNNLNNNNNNNNPNNNNNNNNNSANNKSSPSPSPSSSPITSSPISSLTIN) form a disordered region.

In terms of biological role, promotes the exchange of Ras-bound GDP by GTP. Seems to play a role in chemotaxis. This chain is Ras guanine nucleotide exchange factor Q (gefQ), found in Dictyostelium discoideum (Social amoeba).